The sequence spans 2671 residues: Stalled ribosome sensor GCN1 (2671 aa).

Residue A2 is modified to N-acetylalanine. HEAT repeat units follow at residues 140 to 178, 257 to 293, 294 to 331, 385 to 423, 425 to 459, 460 to 500, 560 to 597, 599 to 636, 700 to 732, and 733 to 772; these read NKLVEVQCLLLLEVLGGSHKHAVDGAVKKLTKLWKENPG, EFKDLILPTIQKSLLRSPENVIETISSLLASVTLDLS, QYALDIVKGLANQLKSNSPRLMDEAVLALRNLARQCSD, CVAELFIPFLQQEVHEGTLVHAVSILALWCNRFTTEVPK, LTDWFKKVFSLKTSTSAVRHAYLQCMLASFRGDTL, LQAL…SKLS, SKVQQYYRVLVAVLLSRTWHVRRQAQQTVRKLLSSLGG, KLANGLLDELKTVLNSHKVLPLEALVTDAGEVTEMGKT, AFITRHLDQIIPRITTQSPLNQSSMNAMGSLSV, and LSPDRVLPQLISTITASVQNPALCLVTREEFSIMQTPAGE. Residue S729 is modified to Phosphoserine. A Phosphoserine modification is found at S786. A coiled-coil region spans residues 804–865; that stretch reads QIIEMELKEE…EAALGLLDAI (62 aa). HEAT repeat units follow at residues 879–918, 979–1016, 1035–1072, 1078–1115, 1155–1192, 1210–1250, 1251–1289, 1290–1332, 1335–1372, 1374–1410, 1413–1451, 1455–1492, 1493–1530, 1534–1571, 1573–1609, 1611–1648, 1653–1690, 1692–1729, 1731–1769, 1773–1810, 1812–1848, 1921–1958, 1959–1996, 2001–2038, 2039–2074, 2076–2108, 2111–2146, 2147–2184, 2188–2225, 2259–2296, 2301–2338, 2339–2380, 2382–2417, 2422–2459, 2546–2583, 2588–2625, and 2627–2661; these read VLVDAFLPLLKSPLAAPRVKGPFLSLAACVMPPRLKTLGT, SLVFPMLKMVLTEMPYHSEEEEEQMAQILQILTVHAQL, LPRVAMLRLLTWVIGTGSPRLQVLASDTLTALCASSSG, FAEQEEVDVLLAALQSPCASVRETALRGLMELRLVLPS, DLQSDLCSLLIDDVIYHEAAVRQAGAEALSQAVARYQR, YRPP…YLDS, SQVKPLFQFFVPDALNDRNPDVRKCMLDAALATLNAHGK, ENVN…HLDK, PKVKPIVAKLIAALSTPSQQVQESVASCLPPLVPAVKE, AGGMIQRLMQQLLESDKYAERKGAAYGLAGLVKGLGI, LKQQEMMAALTDAIQDKKNFRRREGALFAFEMLCTMLGK, PYVVHVLPHLLLCFGDGNQYVREAADDCAKAVMSNLSA, HGVKLVLPSLLAALEEESWRTKAGSVELLGAMAYCAPK, SCLPNIVPKLTEVLTDSHVKVQKAGQQALRQIGSVIRN, EILAIAPVLLDALTDPSRKTQKCLQTLLDTKFVHFID, PSLALIMPIVQRAFQDRSTDTRKMAAQIIGNMYSLTDQ, PYLPSVTPGLKASLLDPVPEVRTVSAKALGAMVKGMGE, CFEDLLPWLMETLTYEQSSVDRSGAAQGLAEVMAGLGV, KLEKLMPEIVATASKVDIAPHVRDGYIMMFNYLPITFGD, PYVGPIIPCILKALADENEFVRDTALRAGQRVISMYAE, AIALLLPQLEQGLFDDLWRIRFSSVQLLGDLLFHISG, EILPTLFGLLLGFLASTCADKRTIAARTLGDLVRKLGE, KILPEIIPILEEGLRSQKSDERQGVCIGLSEIMKSTSR, FFSESLVPTARKALCDPLEEVREAAAKTFEQLHSTIGH, QALEDILPFLLKQLDDEEVSEFALDGLKQVMAVKSR, VLPYLVPKLTTPPVNTRVLAFLSSVAGDALTRH, VILPAVMLALKEKLGTPDEQLEMANCQAVILSVEDD, TGHRIIIEDLLEATRSPEVGMRQAAAIILNMYCSRSKA, SHLRSLVSGLIRLFNDSSPVVLEESWDALNAITKKLDA, RGVTSILPVLREGVLTGSPEQKEEAAKGLGLVIRLTSA, PSVVSITGPLIRILGDRFNWTVKAALLETLSLLLGKVG, IALK…IHVK, DPLFTELLNGIRAVEDPGIRDTMLQALRFVIQGAGS, AIRKNLVSLLLSMLGHDEDNTRISTAGCLGELCAFLTD, QLPPRLSSLLIKCLQNPCSDIRLVAEKMIWWANKEPRP, QTIKPILKALLDNTKDKNTVVRAYSDQAIVNLLKMRRG, and ELLQSLSKILDVASLEALNECSRRSLRKLACQADS. An RWDBD region region spans residues 2260 to 2408; the sequence is GVTSILPVLR…GIRDTMLQAL (149 aa). Position 2276 is a phosphoserine (S2276).

It belongs to the GCN1 family. In terms of assembly, interacts with EIF2AK4/GCN2; this interaction stimulates the EIF2AK4/GCN2 kinase activity and is impaired by IMPACT upon a variety of stress conditions, such as amino acid depletion, UV-C irradiation, proteasome inhibitor treatment and glucose deprivation. Interacts with IMPACT; this prevents the interaction of GCN1 with EIF2AK4/GCN2 and inhibits EIF2AK4/GCN2 kinase activity. Interacts with RNF14; interaction takes place following ribosome stalling and promotes recruitment of RNF14. As to expression, expressed in the hypothalamus, cortex and hippocampus.

Its subcellular location is the cytoplasm. Functionally, ribosome collision sensor that plays a key role in the RNF14-RNF25 translation quality control pathway, a pathway that takes place when a ribosome has stalled during translation, and which promotes ubiquitination and degradation of translation factors on stalled ribosomes. Directly binds to the ribosome and acts as a sentinel for colliding ribosomes: activated following ribosome stalling and promotes recruitment of RNF14, which directly ubiquitinates EEF1A1/eEF1A, leading to its degradation. In addition to EEF1A1/eEF1A, the RNF14-RNF25 translation quality control pathway mediates degradation of ETF1/eRF1 and ubiquitination of ribosomal protein. GCN1 also acts as a positive activator of the integrated stress response (ISR) by mediating activation of EIF2AK4/GCN2 in response to amino acid starvation. Interaction with EIF2AK4/GCN2 on translating ribosomes stimulates EIF2AK4/GCN2 kinase activity, leading to phosphorylation of eukaryotic translation initiation factor 2 (eIF-2-alpha/EIF2S1). EIF2S1/eIF-2-alpha phosphorylation converts EIF2S1/eIF-2-alpha into a global protein synthesis inhibitor, leading to a global attenuation of cap-dependent translation, and thus to a reduced overall utilization of amino acids, while concomitantly initiating the preferential translation of ISR-specific mRNAs, such as the transcriptional activator ATF4, and hence allowing ATF4-mediated reprogramming of amino acid biosynthetic gene expression to alleviate nutrient depletion. The chain is Stalled ribosome sensor GCN1 from Mus musculus (Mouse).